Consider the following 367-residue polypeptide: Anhydro-N-acetylmuramic acid kinase (367 aa).

13 to 20 serves as a coordination point for ATP; sequence GTSMDGAD.

This sequence belongs to the anhydro-N-acetylmuramic acid kinase family.

It carries out the reaction 1,6-anhydro-N-acetyl-beta-muramate + ATP + H2O = N-acetyl-D-muramate 6-phosphate + ADP + H(+). It functions in the pathway amino-sugar metabolism; 1,6-anhydro-N-acetylmuramate degradation. The protein operates within cell wall biogenesis; peptidoglycan recycling. Catalyzes the specific phosphorylation of 1,6-anhydro-N-acetylmuramic acid (anhMurNAc) with the simultaneous cleavage of the 1,6-anhydro ring, generating MurNAc-6-P. Is required for the utilization of anhMurNAc either imported from the medium or derived from its own cell wall murein, and thus plays a role in cell wall recycling. The sequence is that of Anhydro-N-acetylmuramic acid kinase from Neisseria meningitidis serogroup C / serotype 2a (strain ATCC 700532 / DSM 15464 / FAM18).